Here is a 1216-residue protein sequence, read N- to C-terminus: Sodium/potassium/calcium exchanger 1 (1216 aa).

Residues 1–446 (MGKLIRMGAQ…DLFSVEERRQ (446 aa)) are Extracellular-facing. The disordered stretch occupies residues 94-196 (EATAGRDGTP…KYSPSPLGRM (103 aa)). Polar residues-rich tracts occupy residues 110-135 (NTPS…TPTG) and 144-166 (SATP…SYTR). N-linked (GlcNAc...) asparagine glycans are attached at residues N290 and N303. The chain crosses the membrane as a helical span at residues 447–467 (GWVVLHIFGMMYVFVALAIVC). At 468 to 491 (DEYFVPALGVITDKLQISEDVAGA) the chain is on the cytoplasmic side. One copy of the Alpha-1 repeat lies at 488–528 (VAGATFMAAGGSAPELFTSLIGVFISHSNVGIGTIVGSAVF). A helical transmembrane segment spans residues 492–512 (TFMAAGGSAPELFTSLIGVFI). The Extracellular segment spans residues 513 to 518 (SHSNVG). The helical transmembrane segment at 519-539 (IGTIVGSAVFNILFVIGTCAL) threads the bilayer. Over 540 to 557 (FSREILNLTWWPLFRDIT) the chain is Cytoplasmic. A helical transmembrane segment spans residues 558–578 (FYIFDLMMLILFFLDSLIAWW). A topological domain (extracellular) is located at residue E579. A helical transmembrane segment spans residues 580 to 600 (SVLLLLAYAFYVFTMKWNQQL). Residues 601 to 1024 (ELWVKEQLNK…SLEWPETRRK (424 aa)) are Cytoplasmic-facing. S652 carries the phosphoserine modification. The disordered stretch occupies residues 677 to 1018 (GEARPSKDKE…ENEQPLSLEW (342 aa)). A compositionally biased stretch (basic and acidic residues) spans 702–712 (AESKPEEEPAK). A Phosphothreonine modification is found at T717. The stretch at 796–811 (DEDEGEIQAEGGEVKG) is one 1; approximate repeat. Positions 796–928 (DEDEGEIQAE…QAGEAGEVEG (133 aa)) are 8 X 17 AA tandem repeats of D-E-D-E-G-E-I-Q-A-G-E-[GA]-G-E-V-[EK]-G. 6 tandem repeats follow at residues 812–828 (DEDE…EVEG), 829–845 (DEDE…EVEG), 846–862 (DEDE…EVEG), 863–879 (DEDE…EVEG), 880–896 (DEDE…EVEG), and 897–913 (DEDE…EVKG). Acidic residues-rich tracts occupy residues 824–834 (GEVEGDEDEGE), 841–851 (GEVEGDEDEGE), 858–868 (GEVEGDEDEGE), 875–885 (GEVEGDEDEGE), 892–902 (GEVEGDEDEGE), 924–941 (GEVE…DEGE), and 981–1011 (GDSE…EENE). The stretch at 914 to 928 (DEGEIQAGEAGEVEG) is one 8; approximate repeat. Residues 1025-1045 (QAIYLFLLPIVFPLWLTVPDV) form a helical membrane-spanning segment. Over 1046 to 1052 (RRLEAKK) the chain is Extracellular. Residues 1053 to 1073 (FFVITFLGSILWIAMFSYLMV) traverse the membrane as a helical segment. Topologically, residues 1074–1088 (WWAHQVGETIGISEE) are cytoplasmic. The chain crosses the membrane as a helical span at residues 1089–1109 (IMGLTILAAGTSIPDLITSVI). Residues 1096-1127 (AAGTSIPDLITSVIVARKGLGDMAVSSSVGSN) form an Alpha-2 repeat. Residues 1110-1127 (VARKGLGDMAVSSSVGSN) lie on the Extracellular side of the membrane. Residues 1128 to 1148 (IFDITVGLPLPWMLFSLINGL) traverse the membrane as a helical segment. Residues 1149–1157 (QPVAVSSNG) are Cytoplasmic-facing. The chain crosses the membrane as a helical span at residues 1158-1178 (LFCAIVLLFLMLLFVISSIAL). The Extracellular portion of the chain corresponds to 1179 to 1185 (CKWRMNK). Residues 1186-1206 (ILGFTMFLLYFVFLIISVMLE) traverse the membrane as a helical segment. Over 1207–1216 (DRIISCPVSV) the chain is Cytoplasmic.

Belongs to the Ca(2+):cation antiporter (CaCA) (TC 2.A.19) family. SLC24A subfamily. In terms of processing, the uncleaved signal sequence is required for efficient membrane targeting and proper membrane integration and topology. Post-translationally, glycosylated. In terms of tissue distribution, retina.

The protein localises to the cell membrane. It catalyses the reaction Ca(2+)(out) + K(+)(out) + 4 Na(+)(in) = Ca(2+)(in) + K(+)(in) + 4 Na(+)(out). Calcium, potassium:sodium antiporter that transports 1 Ca(2+) and 1 K(+) in exchange for 4 Na(+). Critical component of the visual transduction cascade, controlling the calcium concentration of outer segments during light and darkness. Light causes a rapid lowering of cytosolic free calcium in the outer segment of both retinal rod and cone photoreceptors and the light-induced lowering of calcium is caused by extrusion via this protein which plays a key role in the process of light adaptation. The sequence is that of Sodium/potassium/calcium exchanger 1 (SLC24A1) from Bos taurus (Bovine).